A 256-amino-acid chain; its full sequence is tRNA-cytidine(32) 2-sulfurtransferase (256 aa).

A PP-loop motif motif is present at residues 35 to 40; it reads SGGKDS. [4Fe-4S] cluster contacts are provided by C110, C113, and C201.

Belongs to the TtcA family. In terms of assembly, homodimer. Mg(2+) serves as cofactor. Requires [4Fe-4S] cluster as cofactor.

The protein localises to the cytoplasm. The catalysed reaction is cytidine(32) in tRNA + S-sulfanyl-L-cysteinyl-[cysteine desulfurase] + AH2 + ATP = 2-thiocytidine(32) in tRNA + L-cysteinyl-[cysteine desulfurase] + A + AMP + diphosphate + H(+). It functions in the pathway tRNA modification. Functionally, catalyzes the ATP-dependent 2-thiolation of cytidine in position 32 of tRNA, to form 2-thiocytidine (s(2)C32). The sulfur atoms are provided by the cysteine/cysteine desulfurase (IscS) system. The sequence is that of tRNA-cytidine(32) 2-sulfurtransferase from Coxiella burnetii (strain CbuG_Q212) (Coxiella burnetii (strain Q212)).